The following is a 235-amino-acid chain: Ribonuclease PH (235 aa).

Phosphate is bound by residues R86 and 124-126 (GTR).

The protein belongs to the RNase PH family. Homohexameric ring arranged as a trimer of dimers.

The catalysed reaction is tRNA(n+1) + phosphate = tRNA(n) + a ribonucleoside 5'-diphosphate. Phosphorolytic 3'-5' exoribonuclease that plays an important role in tRNA 3'-end maturation. Removes nucleotide residues following the 3'-CCA terminus of tRNAs; can also add nucleotides to the ends of RNA molecules by using nucleoside diphosphates as substrates, but this may not be physiologically important. Probably plays a role in initiation of 16S rRNA degradation (leading to ribosome degradation) during starvation. This chain is Ribonuclease PH, found in Francisella tularensis subsp. holarctica (strain FTNF002-00 / FTA).